Consider the following 423-residue polypeptide: Replication factor C large subunit (423 aa).

50-57 (GPAGCGKT) provides a ligand contact to ATP.

This sequence belongs to the activator 1 small subunits family. RfcL subfamily. In terms of assembly, heteromultimer composed of small subunits (RfcS) and large subunits (RfcL).

In terms of biological role, part of the RFC clamp loader complex which loads the PCNA sliding clamp onto DNA. This chain is Replication factor C large subunit, found in Staphylothermus marinus (strain ATCC 43588 / DSM 3639 / JCM 9404 / F1).